The following is a 653-amino-acid chain: PAN2-PAN3 deadenylation complex subunit PAN3 (653 aa).

Disordered stretches follow at residues 1 to 21 and 45 to 128; these read MASDSRRGTGSPKMKGRENAK and HDPN…AAPD. The segment at 19–48 adopts a C3H1-type zinc-finger fold; the sequence is NAKDTLCRNVTIYGRCRYEDKGCVYNHDPN. Positions 68–95 are enriched in low complexity; sequence SFTPSLLSSNGSSPTSSSATLKKTTTIS. The span at 108–119 shows a compositional bias: polar residues; that stretch reads GISSRSNASTPS. The segment at 256-516 is pseudokinase domain; that stretch reads QTLPNTQLPA…TIDIFITGIS (261 aa). Residues arginine 308, 357–364, and 416–417 each bind ATP; these read DYHPLSKT and SK. The stretch at 517-555 forms a coiled coil; sequence SQLMSTFDSALHMDDQLTSDLSRELENGRLVRLMTKLNF. The segment at 556-653 is knob domain; the sequence is INERPEYEHD…ALLKPTRRVH (98 aa).

The protein belongs to the protein kinase superfamily. PAN3 family. In terms of assembly, homodimer. Forms a heterotrimer with a catalytic subunit pan2 to form the poly(A)-nuclease (PAN) deadenylation complex. Interacts (via PAM-2 motif) with poly(A)-binding protein pab1 (via PABC domain), conferring substrate specificity of the enzyme complex.

Its subcellular location is the cytoplasm. Its function is as follows. Regulatory subunit of the poly(A)-nuclease (PAN) deadenylation complex, one of two cytoplasmic mRNA deadenylases involved in mRNA turnover. PAN specifically shortens poly(A) tails of RNA and the activity is stimulated by poly(A)-binding protein pab1. PAN deadenylation is followed by rapid degradation of the shortened mRNA tails by the CCR4-NOT complex. Deadenylated mRNAs are then degraded by two alternative mechanisms, namely exosome-mediated 3'-5' exonucleolytic degradation, or deadenylation-dependent mRNA decaping and subsequent 5'-3' exonucleolytic degradation by xrn1. May also be involved in post-transcriptional maturation of mRNA poly(A) tails. pan3 acts as a positive regulator for PAN activity, recruiting the catalytic subunit pan2 to mRNA via its interaction with RNA and with pab1. The chain is PAN2-PAN3 deadenylation complex subunit PAN3 from Aspergillus terreus (strain NIH 2624 / FGSC A1156).